The chain runs to 179 residues: HTH-type transcriptional regulator AldR (179 aa).

The HTH asnC-type domain occupies 32-93 (LDEVDRRILS…DIDPVAVGLP (62 aa)). Positions 51 to 70 (NNALADTVGIAPSTCHGRVR) form a DNA-binding region, H-T-H motif.

Homooctamer. Homotetramer. Tetramer of dimers. The N-terminal DNA-binding domains are swapped, forming a dimer, and four dimers are assembled into an octamer through crystal symmetry.

The DNA-binding activity of AldR is modulated by interaction of AldR with various amino acids. Alanine, tryptophan, tyrosine and aspartate completely abolish the DNA binding ability of AldR. On the other hand, glutamate and asparagine reduce AldR binding to DNA but do not completely abolish it. Binding of amino acids can lead to structural modifications and changes in oligomeric association. Activity is also inhibited by 3 small molecule inhibitors, tetrahydroquinoline carbonitrile derivative (S010-0261), levothyroxine and liothyronine, which can disrupt the AldR-DNA complex. Transcriptional regulator that might play a role under hypoxic conditions. Regulates the expression of ald, which encodes L-alanine dehydrogenase. Serves as both an activator for ald expression in the presence of L-alanine and a repressor in the absence of L-alanine. Acts by binding directly to the upstream region of the ald gene. Four AldR-binding sites (O2, O1, O4 and O3) were identified upstream of the ald gene. O2, O1 and O4 are required for the induction of ald expression by alanine, while O3 is directly involved in the repression of ald expression, by occluding the access of RNA polymerase to the ald promoter. In addition to O3, both O1 and O4 are also necessary for full repression of ald expression in the absence of alanine. The protein is HTH-type transcriptional regulator AldR of Mycobacterium tuberculosis (strain ATCC 25618 / H37Rv).